The sequence spans 439 residues: Vacuolar protein sorting-associated protein 4 (439 aa).

In terms of domain architecture, MIT spans 8 to 75; it reads LSKGIDLVQK…TRAEQLKDHL (68 aa). The disordered stretch occupies residues 76 to 113; that stretch reads EKQAQNKSTAESSVNGSTKAKKSNGDGNGSGDDNDDAD. Polar residues predominate over residues 80 to 93; the sequence is QNKSTAESSVNGST. Position 175-182 (175-182) interacts with ATP; it reads GPPGTGKS.

This sequence belongs to the AAA ATPase family. As to quaternary structure, monomer or homodimer (in nucleotide-free form). Decamer, dodecamer or tetradecamer of two stacked respective homooligomeric rings (when bound to ATP); the dodecameric form seems to be predominant.

It localises to the endosome membrane. Its function is as follows. Pre-vacuolar protein sorting protein involved in the transport of biosynthetic membrane proteins from the prevacuolar/endosomal compartment to the vacuole. Required for multivesicular body (MVB) protein sorting. Catalyzes the ATP-dependent dissociation of class E VPS proteins from endosomal membranes, such as the disassembly of the ESCRT-III complex. Required for extracellular secretion of the secreted aspartyl proteases SAP2, SAP4, SAP5, and SAP6. Its regulation of the pre-vacuolar secretory pathway is critical for virulence. This chain is Vacuolar protein sorting-associated protein 4, found in Candida albicans (strain SC5314 / ATCC MYA-2876) (Yeast).